Reading from the N-terminus, the 123-residue chain is NADH-quinone oxidoreductase subunit A (123 aa).

3 helical membrane-spanning segments follow: residues 11-31 (YLPI…IMIL), 68-88 (LVAI…PWAI), and 93-113 (IGKI…IGFI).

The protein belongs to the complex I subunit 3 family. In terms of assembly, NDH-1 is composed of 14 different subunits. Subunits NuoA, H, J, K, L, M, N constitute the membrane sector of the complex.

The protein resides in the cell inner membrane. It catalyses the reaction a quinone + NADH + 5 H(+)(in) = a quinol + NAD(+) + 4 H(+)(out). NDH-1 shuttles electrons from NADH, via FMN and iron-sulfur (Fe-S) centers, to quinones in the respiratory chain. The immediate electron acceptor for the enzyme in this species is believed to be ubiquinone. Couples the redox reaction to proton translocation (for every two electrons transferred, four hydrogen ions are translocated across the cytoplasmic membrane), and thus conserves the redox energy in a proton gradient. The protein is NADH-quinone oxidoreductase subunit A of Rickettsia felis (strain ATCC VR-1525 / URRWXCal2) (Rickettsia azadi).